Reading from the N-terminus, the 178-residue chain is 2-oxo-4-hydroxy-4-carboxy-5-ureidoimidazoline decarboxylase (178 aa).

His67 serves as the catalytic Proton donor. Substrate is bound by residues Pro68, 84–88 (SQREQ), and 119–123 (FVLAA).

Belongs to the OHCU decarboxylase family.

The protein localises to the peroxisome. It carries out the reaction 5-hydroxy-2-oxo-4-ureido-2,5-dihydro-1H-imidazole-5-carboxylate + H(+) = (S)-allantoin + CO2. It participates in purine metabolism; urate degradation; (S)-allantoin from urate: step 3/3. Catalyzes the stereoselective decarboxylation of 2-oxo-4-hydroxy-4-carboxy-5-ureidoimidazoline (OHCU) to (S)-allantoin. This is 2-oxo-4-hydroxy-4-carboxy-5-ureidoimidazoline decarboxylase (Urad) from Mus musculus (Mouse).